Here is a 268-residue protein sequence, read N- to C-terminus: E3 ubiquitin-protein ligase IAP-3 (268 aa).

2 BIR repeats span residues 18–84 (KAAR…CPFV) and 111–178 (EAAR…CEYV). The Zn(2+) site is built by cysteine 148, cysteine 151, histidine 168, and cysteine 175. The segment at 221–256 (CKICLGAEKTVCFVPCGHVVACGKCAAGVTTCPVCR) adopts an RING-type zinc-finger fold.

The protein belongs to the IAP family. Auto-ubiquitinated.

The catalysed reaction is S-ubiquitinyl-[E2 ubiquitin-conjugating enzyme]-L-cysteine + [acceptor protein]-L-lysine = [E2 ubiquitin-conjugating enzyme]-L-cysteine + N(6)-ubiquitinyl-[acceptor protein]-L-lysine.. Functionally, RING-finger E3 ubiquitin ligase required to prevent cellular apoptosis in infected cells. Ubiquitinates and subsequently targets host pro-apoptotic cellular proteins such as HID for degradation by the proteasome. This Orgyia pseudotsugata multicapsid polyhedrosis virus (OpMNPV) protein is E3 ubiquitin-protein ligase IAP-3 (IAP3).